A 429-amino-acid polypeptide reads, in one-letter code: C4-dicarboxylate transport protein (429 aa).

The next 8 helical transmembrane spans lie at 9–29 (VLYVQVIFAIVVGVILGHYYP), 45–65 (LIKMVIGPIIFCTVVTGIAGM), 79–99 (LLYFEIVSTFALVLGLAATHI), 149–169 (GEILQILLIALLFGSVLAHLG), 185–205 (VLFGIVHIVTKLAPIGAFGAM), 223–243 (LIGTFYLTSVVFVLVVLGAIA), 308–328 (IYMTMAVLFIAQATNIELTWM), and 356–376 (AATLAVVPTIPLSGMVLILGI).

It belongs to the dicarboxylate/amino acid:cation symporter (DAACS) (TC 2.A.23) family.

The protein resides in the cell inner membrane. Functionally, responsible for the transport of dicarboxylates such as succinate, fumarate, and malate from the periplasm across the membrane. The polypeptide is C4-dicarboxylate transport protein (Burkholderia multivorans (strain ATCC 17616 / 249)).